Here is an 884-residue protein sequence, read N- to C-terminus: Microsomal triglyceride transfer protein large subunit (884 aa).

Residues 1 to 21 (MMPVAGLLLCVTAVLCTSALG) form the signal peptide. In terms of domain architecture, Vitellogenin spans 26-660 (LDNGKLYRYS…QSNNALLHGL (635 aa)). The cysteines at positions 172 and 192 are disulfide-linked. Asn-348 carries N-linked (GlcNAc...) asparagine glycosylation. The cysteines at positions 438 and 443 are disulfide-linked. Asn-787 carries N-linked (GlcNAc...) asparagine glycosylation.

As to quaternary structure, heterodimer; heterodimerizes with the protein disulfide isomerase. As to expression, highest expression in the proximal part of the anterior intestine. Lower expression in the distal part of the anterior intestine, in the posterior portion of the intestinal tube and liver. Very low expression levels in heart, brain, ovary, testis and kidney.

Its subcellular location is the endoplasmic reticulum. It is found in the golgi apparatus. The enzyme catalyses a 1,2-diacyl-sn-glycero-3-phosphocholine(in) = a 1,2-diacyl-sn-glycero-3-phosphocholine(out). The catalysed reaction is a 1,2-diacyl-sn-glycero-3-phosphoethanolamine(in) = a 1,2-diacyl-sn-glycero-3-phosphoethanolamine(out). It catalyses the reaction a cholesterol ester(in) = a cholesterol ester(out). It carries out the reaction a triacyl-sn-glycerol(in) = a triacyl-sn-glycerol(out). With respect to regulation, inhibited by naringenin. Its function is as follows. Catalyzes the transport of triglyceride between phospholipid surfaces. Catalyzes the transport of cholesteryl ester, and phospholipid between phospholipid surfaces. Required for the assembly and secretion of plasma lipoproteins that contain apolipoprotein B. Required for yolk lipid utilization and absorption of dietary lipids in larvae. The polypeptide is Microsomal triglyceride transfer protein large subunit (Danio rerio (Zebrafish)).